The sequence spans 327 residues: rRNA 2'-O-methyltransferase fibrillarin (327 aa).

The tract at residues 1–93 (MKPGFSPRGG…RGNQSGKNVM (93 aa)) is disordered. The span at 7–80 (PRGGGFGGRG…GGGRGRGGGR (74 aa)) shows a compositional bias: gly residues. 6 positions are modified to asymmetric dimethylarginine: R8, R15, R21, R24, R28, and R31. Residues K90, K108, and K115 each participate in a glycyl lysine isopeptide (Lys-Gly) (interchain with G-Cter in SUMO2) cross-link. Residue K108 is modified to N6-acetyllysine. At S122 the chain carries Phosphoserine. K127 bears the N6-acetyllysine mark. 2 positions are modified to phosphoserine: S130 and S132. Glycyl lysine isopeptide (Lys-Gly) (interchain with G-Cter in SUMO2) cross-links involve residues K137, K149, and K164. Residues 178–179 (TT) and 197–198 (EF) contribute to the S-adenosyl-L-methionine site. 2 positions are modified to N6-acetyllysine: K211 and K212. Residues 222-223 (DA) and 242-245 (DVAQ) contribute to the S-adenosyl-L-methionine site.

This sequence belongs to the methyltransferase superfamily. Fibrillarin family. In terms of assembly, component of box C/D small nucleolar ribonucleoprotein (snoRNP) particles that contain SNU13, FBL, NOP5 and NOP56, plus a guide RNA. It is associated with the U3, U8, U13, X and Y small nuclear RNAs. Component of several ribosomal and nucleolar protein complexes. Part of the small subunit (SSU) processome, composed of more than 70 proteins and the RNA chaperone small nucleolar RNA (snoRNA) U3. Interacts with PRMT5 and UTP20. Interacts with DDX5 and C1QBP. Interacts with NOL11. Interacts with PIH1D1. Interacts with RRP1B. Interacts with NOLC1. Interacts with SDE2. Interacts with NOP2 and NOP56. Ubiquitinated. Ubiquitination leads to proteasomal degradation. Deubiquitinated by USP36. In terms of processing, by homology to other fibrillarins, some or all of the N-terminal domain arginines are modified to asymmetric dimethylarginine (DMA). Post-translationally, acetylated by CREBBP/CBP, preventing methylation of 'Gln-105' of histone H2A (H2AQ104me), without affecting rRNA methylation. Deacetylation by SIRT7 restores methylation of 'Gln-105' of histone H2A (H2AQ104me).

The protein localises to the nucleus. The protein resides in the nucleolus. It is found in the nucleoplasm. It carries out the reaction L-glutaminyl-[histone H2A] + S-adenosyl-L-methionine = N(5)-methyl-L-glutaminyl-[histone H2A] + S-adenosyl-L-homocysteine + H(+). It catalyses the reaction a ribonucleotide in rRNA + S-adenosyl-L-methionine = a 2'-O-methylribonucleotide in rRNA + S-adenosyl-L-homocysteine + H(+). The enzyme catalyses a ribonucleotide in U6 snRNA + S-adenosyl-L-methionine = a 2'-O-methylribonucleotide in U6 snRNA + S-adenosyl-L-homocysteine + H(+). S-adenosyl-L-methionine-dependent methyltransferase that has the ability to methylate both RNAs and proteins. Involved in pre-rRNA processing by catalyzing the site-specific 2'-hydroxyl methylation of ribose moieties in pre-ribosomal RNA. Site specificity is provided by a guide RNA that base pairs with the substrate. Methylation occurs at a characteristic distance from the sequence involved in base pairing with the guide RNA. Probably catalyzes 2'-O-methylation of U6 snRNAs in box C/D RNP complexes. U6 snRNA 2'-O-methylation is required for mRNA splicing fidelity. Also acts as a protein methyltransferase by mediating methylation of 'Gln-105' of histone H2A (H2AQ104me), a modification that impairs binding of the FACT complex and is specifically present at 35S ribosomal DNA locus. Part of the small subunit (SSU) processome, first precursor of the small eukaryotic ribosomal subunit. During the assembly of the SSU processome in the nucleolus, many ribosome biogenesis factors, an RNA chaperone and ribosomal proteins associate with the nascent pre-rRNA and work in concert to generate RNA folding, modifications, rearrangements and cleavage as well as targeted degradation of pre-ribosomal RNA by the RNA exosome. This Rattus norvegicus (Rat) protein is rRNA 2'-O-methyltransferase fibrillarin (Fbl).